We begin with the raw amino-acid sequence, 564 residues long: MLRLMRQQKKETYYLWIALFLLLLYVSPLFILKEDAHIRVHDNLDSNIAWYKVLADSGEIVGKVDAAIPQIINGLPRDAFGTEWSGIVWLHAFFSSMTAYAISQTVTRVVAFFGMYVLLKKHIIPEPKAAFIRIGVSLAFALTPFWPSGMLSTLGYPLALWAFLNIRKGDISWREWLTLGLLPLYSSFVLGFFFFLAGMACFWLYDAITKRRWNLMFLGSIAFMTSIYLFVEYRLVYSMLFEHAPMHRIEFISSRHDVWHSLRLSIKNFVYGHNHVMTVHTVVILPILMVVFAALLFKRNRTKPENVYLFLCVLNYGLSLWYAFWFNKIWAVPKQKFAFLAEFNFARFHFLRPLVIYVSFALALYLIWRMGKGWKWLVYAAVAAQLMVLAPFNEEYTYGVHYNAPTFREFYASEQFKEIKEYIGRPQDSYRVASIGLHPSIAQYNGFYTLDTYNNLYPLSYKYEFRKIIEKELEKNSRLKQYFDEWGSRCYLFVDELGKRYDFKKNSKKTINNLQLNTDVFKKMGGRYIFSSVPIMNAEQNHLALVKTFDHKDSAWRIYLYETR.

8 helical membrane passes run 12 to 32 (TYYL…LFIL), 97 to 119 (MTAY…YVLL), 139 to 161 (AFAL…LALW), 188 to 208 (FVLG…YDAI), 213 to 233 (WNLM…FVEY), 277 to 297 (MTVH…ALLF), 306 to 326 (NVYL…AFWF), and 348 to 368 (FHFL…YLIW).

It localises to the cell membrane. This is an uncharacterized protein from Bacillus subtilis (strain 168).